The sequence spans 301 residues: MKYTIISGPTAVGKTDIVLEIASQINANIISVDSRQIYKLMDIGTAKPSKEEKSKVTHYLIDHIYPDEYYNAFLFRQDALKIRDKLVNEGIVPLFVGGTGLYIDSLVRGFFEGVPKDEKLRKELSEMEKNEPGILRSMLEKYDPQAAQKIHPSDIKRTIRALEVYFKTGKKISQLQTQSEYSKDYKILVLDRYRDELYERINLRVDKMIKEGLVDEVKSLLEKYPKDLNAFQTIGYKEIIRYLENTYDLNTAVHLIKKNTRHYARRQIIWLRRYKQAKWINLSEISRKKAIEEIKKFILEV.

8 to 15 is a binding site for ATP; it reads GPTAVGKT. Residue 10–15 coordinates substrate; the sequence is TAVGKT. The interval 33 to 36 is interaction with substrate tRNA; it reads DSRQ.

It belongs to the IPP transferase family. As to quaternary structure, monomer. Mg(2+) is required as a cofactor.

The enzyme catalyses adenosine(37) in tRNA + dimethylallyl diphosphate = N(6)-dimethylallyladenosine(37) in tRNA + diphosphate. Its function is as follows. Catalyzes the transfer of a dimethylallyl group onto the adenine at position 37 in tRNAs that read codons beginning with uridine, leading to the formation of N6-(dimethylallyl)adenosine (i(6)A). The protein is tRNA dimethylallyltransferase of Thermosipho africanus (strain TCF52B).